Here is a 125-residue protein sequence, read N- to C-terminus: Small ribosomal subunit protein eS8 (125 aa).

Over residues 1–23 (MQFQGRSRRKYTGAKLKSARGKR) the composition is skewed to basic residues. A disordered region spans residues 1–34 (MQFQGRSRRKYTGAKLKSARGKRKFELGREPAAT).

This sequence belongs to the eukaryotic ribosomal protein eS8 family. As to quaternary structure, part of the 30S ribosomal subunit.

The protein is Small ribosomal subunit protein eS8 of Methanococcoides burtonii (strain DSM 6242 / NBRC 107633 / OCM 468 / ACE-M).